The chain runs to 355 residues: Fe-S cluster assembly protein DRE2 (355 aa).

The N-terminal SAM-like domain stretch occupies residues 23-156; sequence TSFNPRTLLL…KPDYSASVAV (134 aa). The linker stretch occupies residues 157–247; that stretch reads PLRLRRKDNS…EDTLLTEEDM (91 aa). The interval 189–214 is disordered; it reads RKSVDMTDDVPEKDVPKVDSPKNDAP. A compositionally biased stretch (basic and acidic residues) spans 190 to 213; sequence KSVDMTDDVPEKDVPKVDSPKNDA. Cysteine 257, cysteine 268, cysteine 271, and cysteine 273 together coordinate [2Fe-2S] cluster. Residues 257 to 273 are fe-S binding site A; the sequence is CAPRAGKRRRACKDCTC. [4Fe-4S] cluster is bound by residues cysteine 318, cysteine 321, cysteine 329, and cysteine 332. 2 consecutive short sequence motifs (cx2C motif) follow at residues 318-321 and 329-332; these read CGNC and CDGC. The interval 318–332 is fe-S binding site B; the sequence is CGNCSLGDAFRCDGC.

It belongs to the anamorsin family. In terms of assembly, monomer. Interacts with TAH18. Interacts with MIA40. [2Fe-2S] cluster is required as a cofactor. Requires [4Fe-4S] cluster as cofactor.

Its subcellular location is the cytoplasm. The protein resides in the mitochondrion intermembrane space. Functionally, component of the cytosolic iron-sulfur (Fe-S) protein assembly (CIA) machinery required for the maturation of extramitochondrial Fe-S proteins. Part of an electron transfer chain functioning in an early step of cytosolic Fe-S biogenesis, facilitating the de novo assembly of a [4Fe-4S] cluster on the scaffold complex CFD1-NBP35. Electrons are transferred to DRE2 from NADPH via the FAD- and FMN-containing protein TAH18. TAH18-DRE2 are also required for the assembly of the diferric tyrosyl radical cofactor of ribonucleotide reductase (RNR), probably by providing electrons for reduction during radical cofactor maturation in the catalytic small subunit RNR2. This Botryotinia fuckeliana (strain B05.10) (Noble rot fungus) protein is Fe-S cluster assembly protein DRE2.